The primary structure comprises 738 residues: DNA topoisomerase 4 subunit A (738 aa).

The 465-residue stretch at Leu-32–Gln-496 folds into the Topo IIA-type catalytic domain. Tyr-120 serves as the catalytic O-(5'-phospho-DNA)-tyrosine intermediate.

Belongs to the type II topoisomerase GyrA/ParC subunit family. ParC type 1 subfamily. In terms of assembly, heterotetramer composed of ParC and ParE.

It localises to the cell membrane. The catalysed reaction is ATP-dependent breakage, passage and rejoining of double-stranded DNA.. Functionally, topoisomerase IV is essential for chromosome segregation. It relaxes supercoiled DNA. Performs the decatenation events required during the replication of a circular DNA molecule. This is DNA topoisomerase 4 subunit A from Rickettsia prowazekii (strain Madrid E).